A 547-amino-acid polypeptide reads, in one-letter code: CTP synthase (547 aa).

The amidoligase domain stretch occupies residues 1 to 269 (MKTKFIFVTG…DQKVAIMLRL (269 aa)). Ser-14 is a CTP binding site. Ser-14 lines the UTP pocket. ATP is bound by residues 15-20 (SLGKGL) and Asp-72. 2 residues coordinate Mg(2+): Asp-72 and Glu-143. CTP contacts are provided by residues 150-152 (DIE), 190-195 (KTKPTQ), and Lys-226. UTP contacts are provided by residues 190 to 195 (KTKPTQ) and Lys-226. Residues 294–547 (TVAIVGKYVD…IGAAKKHAKV (254 aa)) form the Glutamine amidotransferase type-1 domain. Residue Gly-356 coordinates L-glutamine. Cys-383 (nucleophile; for glutamine hydrolysis) is an active-site residue. Residues 384–387 (LGMQ), Glu-407, and Arg-475 each bind L-glutamine. Active-site residues include His-520 and Glu-522.

It belongs to the CTP synthase family. As to quaternary structure, homotetramer.

It carries out the reaction UTP + L-glutamine + ATP + H2O = CTP + L-glutamate + ADP + phosphate + 2 H(+). It catalyses the reaction L-glutamine + H2O = L-glutamate + NH4(+). The catalysed reaction is UTP + NH4(+) + ATP = CTP + ADP + phosphate + 2 H(+). It participates in pyrimidine metabolism; CTP biosynthesis via de novo pathway; CTP from UDP: step 2/2. Its activity is regulated as follows. Allosterically activated by GTP, when glutamine is the substrate; GTP has no effect on the reaction when ammonia is the substrate. The allosteric effector GTP functions by stabilizing the protein conformation that binds the tetrahedral intermediate(s) formed during glutamine hydrolysis. Inhibited by the product CTP, via allosteric rather than competitive inhibition. Its function is as follows. Catalyzes the ATP-dependent amination of UTP to CTP with either L-glutamine or ammonia as the source of nitrogen. Regulates intracellular CTP levels through interactions with the four ribonucleotide triphosphates. This Desulfovibrio desulfuricans (strain ATCC 27774 / DSM 6949 / MB) protein is CTP synthase.